Consider the following 327-residue polypeptide: Thiamine-binding periplasmic protein (327 aa).

An N-terminal signal peptide occupies residues 1–18 (MLKKYLPLLLLCAAPAFA). Residues 59 to 60 (DG), 161 to 162 (ST), Trp-197, and 215 to 218 (YTTS) each bind thiamine.

It belongs to the bacterial solute-binding protein 1 family. The complex is composed of two ATP-binding proteins (ThiQ), two transmembrane proteins (ThiP) and a solute-binding protein (ThiB).

It is found in the periplasm. Functionally, part of the ABC transporter complex ThiBPQ involved in thiamine import. Is also involved in thiamine pyrophosphate transport. The polypeptide is Thiamine-binding periplasmic protein (Salmonella typhimurium (strain LT2 / SGSC1412 / ATCC 700720)).